Here is a 37-residue protein sequence, read N- to C-terminus: Mu-agatoxin-Aa1b (37 aa).

4 disulfide bridges follow: Cys2–Cys18, Cys9–Cys23, Cys17–Cys33, and Cys25–Cys31. At Ser37 the chain carries Serine amide.

Belongs to the neurotoxin 07 (Beta/delta-agtx) family. 01 (aga-2) subfamily. Expressed by the venom gland.

It localises to the secreted. Insecticidal neurotoxin that induces an irreversible spastic paralysis when injected into insects. Modifies presynaptic voltage-gated sodium channels (Nav), causing them to open at the normal resting potential of the nerve. This leads to spontaneous release of neurotransmitter and repetitive action potentials in motor neurons. This is Mu-agatoxin-Aa1b from Agelenopsis aperta (North American funnel-web spider).